Consider the following 306-residue polypeptide: 2-phospho-L-lactate transferase (306 aa).

Residues Asp54 and Arg93 each coordinate 7,8-didemethyl-8-hydroxy-5-deazariboflavin.

It belongs to the CofD family. As to quaternary structure, homodimer. Mg(2+) serves as cofactor.

It catalyses the reaction (2S)-lactyl-2-diphospho-5'-guanosine + 7,8-didemethyl-8-hydroxy-5-deazariboflavin = oxidized coenzyme F420-0 + GMP + H(+). It functions in the pathway cofactor biosynthesis; coenzyme F420 biosynthesis. Catalyzes the transfer of the 2-phospholactate moiety from (2S)-lactyl-2-diphospho-5'-guanosine to 7,8-didemethyl-8-hydroxy-5-deazariboflavin (FO) with the formation of oxidized coenzyme F420-0 and GMP. The chain is 2-phospho-L-lactate transferase from Methanothermobacter thermautotrophicus (strain ATCC 29096 / DSM 1053 / JCM 10044 / NBRC 100330 / Delta H) (Methanobacterium thermoautotrophicum).